Reading from the N-terminus, the 447-residue chain is Cysteine--tRNA ligase (447 aa).

C28 lines the Zn(2+) pocket. The 'HIGH' region motif lies at 30-40; it reads PTVYNYIHIGN. 3 residues coordinate Zn(2+): C211, H236, and E240. Positions 268–272 match the 'KMSKS' region motif; that stretch reads KMSKS. K271 serves as a coordination point for ATP.

It belongs to the class-I aminoacyl-tRNA synthetase family. Monomer. The cofactor is Zn(2+).

Its subcellular location is the cytoplasm. The enzyme catalyses tRNA(Cys) + L-cysteine + ATP = L-cysteinyl-tRNA(Cys) + AMP + diphosphate. This is Cysteine--tRNA ligase from Streptococcus pyogenes serotype M28 (strain MGAS6180).